A 428-amino-acid chain; its full sequence is Serine--tRNA ligase (428 aa).

235–237 (TAE) lines the L-serine pocket. Position 266-268 (266-268 (RSE)) interacts with ATP. E289 contacts L-serine. 353 to 356 (EISS) serves as a coordination point for ATP. Residue S389 coordinates L-serine.

The protein belongs to the class-II aminoacyl-tRNA synthetase family. Type-1 seryl-tRNA synthetase subfamily. Homodimer. The tRNA molecule binds across the dimer.

It localises to the cytoplasm. It catalyses the reaction tRNA(Ser) + L-serine + ATP = L-seryl-tRNA(Ser) + AMP + diphosphate + H(+). The enzyme catalyses tRNA(Sec) + L-serine + ATP = L-seryl-tRNA(Sec) + AMP + diphosphate + H(+). The protein operates within aminoacyl-tRNA biosynthesis; selenocysteinyl-tRNA(Sec) biosynthesis; L-seryl-tRNA(Sec) from L-serine and tRNA(Sec): step 1/1. Functionally, catalyzes the attachment of serine to tRNA(Ser). Is also able to aminoacylate tRNA(Sec) with serine, to form the misacylated tRNA L-seryl-tRNA(Sec), which will be further converted into selenocysteinyl-tRNA(Sec). This Shewanella sp. (strain ANA-3) protein is Serine--tRNA ligase.